An 896-amino-acid polypeptide reads, in one-letter code: Phosphatidate phosphatase LPIN2 (896 aa).

An N-LIP region spans residues 1-108; the sequence is MNYVGQLAGQ…LPAYLATSPI (108 aa). S106 carries the post-translational modification Phosphoserine. Positions 120 to 208 are disordered; the sequence is TPLVKSGGDE…SSNASLKEEE (89 aa). The span at 152 to 162 shows a compositional bias: basic residues; it reads VKKKKRRRKKY. A Nuclear localization signal motif is present at residues 153–158; sequence KKKKRR. S174, S186, S187, S243, and S303 each carry phosphoserine. 2 disordered regions span residues 370–405 and 420–459; these read AEAP…DIYL and FPKS…TECL. A compositionally biased stretch (basic residues) spans 387–396; the sequence is KKKGVHKRSQ. Over residues 426-448 the composition is skewed to polar residues; that stretch reads EPGSRQWPESDTLSGSQSPQSVG. S566 carries the phosphoserine modification. Positions 569–579 are enriched in basic and acidic residues; it reads KQLPESKEGKS. The segment at 569–636 is disordered; that stretch reads KQLPESKEGK…LSHGSTTSYK (68 aa). Residues 604-617 are compositionally biased toward acidic residues; the sequence is SSSDEGSQELEESI. Residues 635–837 are C-LIP; it reads YKKSLRLSSD…RIFTVNPKGE (203 aa). Positions 689 to 693 match the DXDXT motif motif; the sequence is DIDGT. An LXXIL motif motif is present at residues 700–704; that stretch reads LGQIL.

Belongs to the lipin family. Requires Mg(2+) as cofactor. In terms of tissue distribution, expressed in liver, lung, kidney, placenta, spleen, thymus, lymph node, prostate, testes, small intestine, and colon.

It is found in the nucleus. Its subcellular location is the cytoplasm. It localises to the cytosol. The protein resides in the endoplasmic reticulum membrane. The enzyme catalyses a 1,2-diacyl-sn-glycero-3-phosphate + H2O = a 1,2-diacyl-sn-glycerol + phosphate. With respect to regulation, inhibited by N-ethylmaleimide. Acts as a magnesium-dependent phosphatidate phosphatase enzyme which catalyzes the conversion of phosphatidic acid to diacylglycerol during triglyceride, phosphatidylcholine and phosphatidylethanolamine biosynthesis in the endoplasmic reticulum membrane. Plays important roles in controlling the metabolism of fatty acids at different levels. Also acts as a nuclear transcriptional coactivator for PPARGC1A to modulate lipid metabolism. This chain is Phosphatidate phosphatase LPIN2, found in Homo sapiens (Human).